The chain runs to 294 residues: Undecaprenyl-diphosphatase (294 aa).

Helical transmembrane passes span 2–22, 27–47, 65–85, 110–130, 135–155, 172–192, 215–235, 239–259, and 272–292; these read SMIYITLNIIAYVIDVRSLIL, LVFSLILGIVEGLTEFLPISS, VIAFTVIIQLGAILSITKIFW, LCIRHIFLGTFPGIMLGMIFY, LIFELTYIMYGLIIGGIFLLV, ITYLQAFLIGCFQCLAFWPGF, FSFFLAVPIIFGSAVLTLYHY, IGLMDVLLLIAGSATAFFIAL, and VSLIPFAIYRFLLAGGIYWGL.

Belongs to the UppP family.

It is found in the cell inner membrane. It catalyses the reaction di-trans,octa-cis-undecaprenyl diphosphate + H2O = di-trans,octa-cis-undecaprenyl phosphate + phosphate + H(+). Catalyzes the dephosphorylation of undecaprenyl diphosphate (UPP). Confers resistance to bacitracin. The sequence is that of Undecaprenyl-diphosphatase from Blochmanniella pennsylvanica (strain BPEN).